A 286-amino-acid chain; its full sequence is Protein HEAT-STRESS-ASSOCIATED 32 (286 aa).

It belongs to the phosphosulfolactate synthase family.

Its function is as follows. Transactivator required, together with HSP101, for long-term acquired thermotolerance (LAT) maintenance, probably by regulating heat-inducible genes expression, thus being a cellular component of thermomemory. This is Protein HEAT-STRESS-ASSOCIATED 32 from Arabidopsis thaliana (Mouse-ear cress).